The primary structure comprises 466 residues: Glycosyl hydrolase family 109 protein (466 aa).

The tat-type signal signal peptide spans 1–30; the sequence is MENTRRSFLKKVSAAGIGAAGLAMAGNAGA. NAD(+)-binding positions include 59–60, D81, 130–133, 151–152, and N180; these read SR, WEWH, and EV. Y209 lines the substrate pocket. 241 to 245 is a binding site for NAD(+); sequence AEAQW. Substrate is bound by residues R246, 258–261, and Y340; that span reads YPTH. Y258 lines the NAD(+) pocket.

Belongs to the Gfo/Idh/MocA family. Glycosyl hydrolase 109 subfamily. NAD(+) is required as a cofactor. In terms of processing, predicted to be exported by the Tat system. The position of the signal peptide cleavage has not been experimentally proven.

Its function is as follows. Glycosidase. This is Glycosyl hydrolase family 109 protein from Parabacteroides distasonis (strain ATCC 8503 / DSM 20701 / CIP 104284 / JCM 5825 / NCTC 11152).